We begin with the raw amino-acid sequence, 571 residues long: Dual specificity testis-specific protein kinase 2 (571 aa).

The 256-residue stretch at 58 to 313 (DFTCEKIGSG…EIGKTLEEIL (256 aa)) folds into the Protein kinase domain. ATP-binding positions include 64–72 (IGSGFFSEV) and K87. D176 acts as the Proton acceptor in catalysis. S219 is subject to Phosphoserine; by autocatalysis. S369, S456, and S460 each carry phosphoserine. The tract at residues 521–571 (ENGFGSRPQGTSPCPAGASEEMEVEERPAGSTPATFSTSGIGLQTQGKQDG) is disordered. A compositionally biased stretch (polar residues) spans 552-571 (TPATFSTSGIGLQTQGKQDG).

This sequence belongs to the protein kinase superfamily. TKL Ser/Thr protein kinase family. Mg(2+) serves as cofactor. The cofactor is Mn(2+). In terms of tissue distribution, predominantly expressed in testis and prostate. Found predominantly in non-germinal Sertoli cells.

The protein resides in the nucleus. It catalyses the reaction L-seryl-[protein] + ATP = O-phospho-L-seryl-[protein] + ADP + H(+). The enzyme catalyses L-threonyl-[protein] + ATP = O-phospho-L-threonyl-[protein] + ADP + H(+). The catalysed reaction is L-tyrosyl-[protein] + ATP = O-phospho-L-tyrosyl-[protein] + ADP + H(+). With respect to regulation, activated by autophosphorylation on Ser-219. In terms of biological role, dual specificity protein kinase activity catalyzing autophosphorylation and phosphorylation of exogenous substrates on both serine/threonine and tyrosine residues. Phosphorylates cofilin at 'Ser-3'. May play an important role in spermatogenesis. This Homo sapiens (Human) protein is Dual specificity testis-specific protein kinase 2 (TESK2).